Reading from the N-terminus, the 403-residue chain is Spindle assembly abnormal protein 5 (403 aa).

Disordered regions lie at residues 24–79 (PRVF…AHPA) and 96–127 (TVEGTSRHTKKAIASPSQNHRMTEENQEENWR). Residues 116-127 (RMTEENQEENWR) are compositionally biased toward basic and acidic residues. The stretch at 128–163 (DVMKNEFEVMRKEMQEEATKKQEELNAQNLNKMQEM) forms a coiled coil. Disordered regions lie at residues 174–205 (AKPSAEESQDREKENWYEQSRHARQQKPANKI), 255–276 (AYSPLPPLSPPSGRYANGSSGN), 302–325 (RQWTSERNDNRTHDNYRPYEPDPQ), and 355–403 (YHVE…SRRK). Residues 177–194 (SAEESQDREKENWYEQSR) are compositionally biased toward basic and acidic residues. The span at 305–321 (TSERNDNRTHDNYRPYE) shows a compositional bias: basic and acidic residues. Over residues 360–369 (VPEYEEEETE) the composition is skewed to acidic residues. Residues 379-403 (YHEPMETESAAERERRIREKYSRRK) are compositionally biased toward basic and acidic residues.

As to quaternary structure, interacts with sas-6 via its coiled coil domain.

It is found in the cytoplasm. It localises to the cytoskeleton. Its subcellular location is the microtubule organizing center. The protein resides in the centrosome. The protein localises to the centriole. Functionally, required for centrosome duplication. Essential for daughter-centriole formation. Requires both maternal and partenal expression, suggesting that it regulates centriole duplication during both spermatogenesis and early embryogenesis. This Caenorhabditis briggsae protein is Spindle assembly abnormal protein 5 (sas-5).